We begin with the raw amino-acid sequence, 175 residues long: Thioredoxin M-type, chloroplastic (175 aa).

Residues 1-62 (MALETCLRGW…ARRPSRFVCK (62 aa)) constitute a chloroplast transit peptide. Residues 63 to 174 (CKNVVDEVIV…LCTIIDKYIG (112 aa)) form the Thioredoxin domain. Cysteine 98 and cysteine 101 are joined by a disulfide.

It belongs to the thioredoxin family. Plant M-type subfamily. In terms of assembly, forms a complex with heterodimeric ferredoxin-thioredoxin reductase (FTR) and ferredoxin.

The protein resides in the plastid. Its subcellular location is the chloroplast. Participates in various redox reactions through the reversible oxidation of the active center dithiol to a disulfide. The M form is known to activate NADP-malate dehydrogenase. The sequence is that of Thioredoxin M-type, chloroplastic from Triticum aestivum (Wheat).